The primary structure comprises 652 residues: Small ribosomal subunit protein mS39 (652 aa).

A mitochondrion-targeting transit peptide spans 1-37; sequence MYLSRQLRLLPRANIACSLSSSGAHYTTAAPAEDAPI. PPR repeat units lie at residues 129 to 163, 225 to 259, 260 to 299, 300 to 338, and 547 to 581; these read DSVV…GNPI, TPQS…QVQL, DTNT…KLRP, NLGT…GVNP, and TGQM…QHRI.

Belongs to the mitochondrion-specific ribosomal protein mS39 family.

It is found in the mitochondrion. Functionally, mitochondrial protein that may have a role in mitochondrial translation. Essential for larval development. This is Small ribosomal subunit protein mS39 from Drosophila melanogaster (Fruit fly).